A 180-amino-acid polypeptide reads, in one-letter code: dCTP deaminase, dUMP-forming (180 aa).

Residues 100-105 (RSSLGR), aspartate 117, 125-127 (TLE), glutamine 146, tyrosine 160, and glutamine 167 each bind dCTP. Glutamate 127 functions as the Proton donor/acceptor in the catalytic mechanism.

The protein belongs to the dCTP deaminase family. Homotrimer.

It catalyses the reaction dCTP + 2 H2O = dUMP + NH4(+) + diphosphate. The protein operates within pyrimidine metabolism; dUMP biosynthesis; dUMP from dCTP: step 1/1. Its function is as follows. Bifunctional enzyme that catalyzes both the deamination of dCTP to dUTP and the hydrolysis of dUTP to dUMP without releasing the toxic dUTP intermediate. This Sulfurihydrogenibium sp. (strain YO3AOP1) protein is dCTP deaminase, dUMP-forming.